A 229-amino-acid polypeptide reads, in one-letter code: Small ribosomal subunit protein uS3 (229 aa).

A KH type-2 domain is found at 39-107 (VRQYLTEKLK…TAQINIAEIR (69 aa)).

The protein belongs to the universal ribosomal protein uS3 family. In terms of assembly, part of the 30S ribosomal subunit. Forms a tight complex with proteins S10 and S14.

Its function is as follows. Binds the lower part of the 30S subunit head. Binds mRNA in the 70S ribosome, positioning it for translation. This chain is Small ribosomal subunit protein uS3, found in Shewanella frigidimarina (strain NCIMB 400).